The sequence spans 289 residues: Sphingomyelinase D (289 aa).

Residues 1–22 form the signal peptide; that stretch reads MQSISVLICVLLALSILNFTVA. Residue H34 is part of the active site. 3 residues coordinate Mg(2+): E54, D56, and D103. An SMD-tail motif is present at residues 282–289; it reads ATEDDAPW.

Belongs to the sphingomyelinase D/phospholipase D family. Requires Mg(2+) as cofactor.

The protein localises to the secreted. It catalyses the reaction a sphingomyelin + H2O = an N-acylsphing-4-enine 1-phosphate + choline + H(+). Sphingomyelinase activity is reduced by 33 percent following addition of EDTA. Its function is as follows. Catalyzes the hydrolysis of sphingomyelin. Sphingomyelinases D are produced by some spider in their venoms, but also by arthropods such as ticks, or pathogenic bacteria and fungi. They might play a role in pathogenicity through different mechanisms, such as membrane destabilization and host cell penetration, but also pulmonary inflammation and cutaneous lesions. The polypeptide is Sphingomyelinase D (Aspergillus flavus (strain ATCC 200026 / FGSC A1120 / IAM 13836 / NRRL 3357 / JCM 12722 / SRRC 167)).